Reading from the N-terminus, the 192-residue chain is uncharacterized protein (192 aa).

It belongs to the CAPAB/TerDEXZ family.

This is an uncharacterized protein from Bacillus subtilis (strain 168).